The sequence spans 876 residues: Alanine--tRNA ligase (876 aa).

Zn(2+) contacts are provided by His-562, His-566, Cys-666, and His-670.

This sequence belongs to the class-II aminoacyl-tRNA synthetase family. Zn(2+) is required as a cofactor.

The protein resides in the cytoplasm. It catalyses the reaction tRNA(Ala) + L-alanine + ATP = L-alanyl-tRNA(Ala) + AMP + diphosphate. Functionally, catalyzes the attachment of alanine to tRNA(Ala) in a two-step reaction: alanine is first activated by ATP to form Ala-AMP and then transferred to the acceptor end of tRNA(Ala). Also edits incorrectly charged Ser-tRNA(Ala) and Gly-tRNA(Ala) via its editing domain. The protein is Alanine--tRNA ligase of Hahella chejuensis (strain KCTC 2396).